The sequence spans 661 residues: Transmembrane and coiled-coil domain-containing protein STS1 (661 aa).

Disordered regions lie at residues 34–71 and 154–185; these read AHHH…GADA and VGNT…DDQL. The span at 59 to 69 shows a compositional bias: low complexity; it reads SSSSSNSGAGA. The span at 175 to 184 shows a compositional bias: basic and acidic residues; the sequence is SPGESSHDDQ. A run of 4 helical transmembrane segments spans residues 306-326, 333-353, 355-375, and 466-486; these read ALLA…FGAL, LVPV…GSVA, SVAV…SKMA, and LSGL…TDFI.

This sequence belongs to the TMCO4 family. Interacts with PKS10/PKS2 and 4CLL9/ACOS12.

It is found in the endoplasmic reticulum membrane. In terms of biological role, involved in anther lipids biosynthesis and is required for tapetum degradation and pollen wall formation. Required for the formation of Ubisch bodies and microspores. Possesses lipase activity in vitro toward two synthetic substrates, p-nitrophenyl acetate (pNPA) and p-nitrophenyl butyrate (pNPB). The protein is Transmembrane and coiled-coil domain-containing protein STS1 of Oryza sativa subsp. japonica (Rice).